Reading from the N-terminus, the 228-residue chain is SPbeta prophage-derived uncharacterized protein YomL (228 aa).

An N-terminal signal peptide occupies residues 1 to 28 (MRKKRVITCVMAASLTLGSLLPAGYATA).

This Bacillus subtilis (strain 168) protein is SPbeta prophage-derived uncharacterized protein YomL (yomL).